A 419-amino-acid polypeptide reads, in one-letter code: Putative zinc metalloprotease SP_0263 (419 aa).

Histidine 18 contacts Zn(2+). The active site involves glutamate 19. Histidine 22 is a binding site for Zn(2+). 3 helical membrane passes run 169-191, 345-367, and 388-410; these read LITN…WVLI, ILYF…IPAL, and EIET…AVTW.

This sequence belongs to the peptidase M50B family. Zn(2+) serves as cofactor.

It is found in the cell membrane. The polypeptide is Putative zinc metalloprotease SP_0263 (Streptococcus pneumoniae serotype 4 (strain ATCC BAA-334 / TIGR4)).